Reading from the N-terminus, the 416-residue chain is Counting factor 60 (416 aa).

The first 22 residues, 1-22, serve as a signal peptide directing secretion; that stretch reads MIKKSALITLFLVSLILGVSLS. Residues asparagine 110, asparagine 218, asparagine 231, asparagine 318, and asparagine 411 are each glycosylated (N-linked (GlcNAc...) asparagine).

Belongs to the histidine acid phosphatase family. In terms of assembly, component of the counting factor (CF) complex, which includes cf60, cf50, cf45-1 and ctnA.

It localises to the secreted. Cell-counting factor that limits the maximum size of the multicellular structure. Does not possess acid phosphatase activity. Cells with decreased levels of this protein form large groups while cells overexpressing this protein form small groups. This Dictyostelium discoideum (Social amoeba) protein is Counting factor 60 (cf60).